We begin with the raw amino-acid sequence, 205 residues long: Imidazole glycerol phosphate synthase subunit HisH (205 aa).

A Glutamine amidotransferase type-1 domain is found at 3–205 (KIGLIDYGMG…LLRRWIKSIQ (203 aa)). The active-site Nucleophile is Cys-81. Catalysis depends on residues His-185 and Glu-187.

Heterodimer of HisH and HisF.

Its subcellular location is the cytoplasm. The enzyme catalyses 5-[(5-phospho-1-deoxy-D-ribulos-1-ylimino)methylamino]-1-(5-phospho-beta-D-ribosyl)imidazole-4-carboxamide + L-glutamine = D-erythro-1-(imidazol-4-yl)glycerol 3-phosphate + 5-amino-1-(5-phospho-beta-D-ribosyl)imidazole-4-carboxamide + L-glutamate + H(+). It carries out the reaction L-glutamine + H2O = L-glutamate + NH4(+). It participates in amino-acid biosynthesis; L-histidine biosynthesis; L-histidine from 5-phospho-alpha-D-ribose 1-diphosphate: step 5/9. Functionally, IGPS catalyzes the conversion of PRFAR and glutamine to IGP, AICAR and glutamate. The HisH subunit catalyzes the hydrolysis of glutamine to glutamate and ammonia as part of the synthesis of IGP and AICAR. The resulting ammonia molecule is channeled to the active site of HisF. The protein is Imidazole glycerol phosphate synthase subunit HisH of Prochlorococcus marinus subsp. pastoris (strain CCMP1986 / NIES-2087 / MED4).